A 101-amino-acid chain; its full sequence is CLAVATA3/ESR (CLE)-related protein 18 (101 aa).

An N-terminal signal peptide occupies residues 1-25; that stretch reads MHLLKGGVVLIITLILFLITSSIVA. The interval 37 to 58 is disordered; that stretch reads RQIPTGPDPLHNPPQPSPKHHH. Hydroxyproline occurs at positions 40 and 43. Residues 42–53 are compositionally biased toward pro residues; sequence GPDPLHNPPQPS. The O-linked (Ara...) hydroxyproline glycan is linked to Pro-43. Tyr-76 carries the sulfotyrosine modification. Position 84 is a hydroxyproline (Pro-84).

It belongs to the CLV3/ESR signal peptide family. Post-translationally, the tyrosine sulfation is critical for the function of the peptide. In terms of processing, the O-glycosylation (arabinosylation) of the hydroxyproline Pro-43 enhances binding affinity of the CLE18p peptide for its receptor. Expressed in roots, leaves, siliques and seedlings.

The protein resides in the secreted. The protein localises to the extracellular space. Root growth factor that regulates the pattern of root growth and lateral root development by modulating the length and the number of cortical cells in the root apical meristem (RAM), and the anticlinal asymmetric cell divisions in lateral root initiation cells. In terms of biological role, extracellular signal peptide that regulates cell fate. Represses root apical meristem maintenance. Root growth factor that regulates the pattern of root growth and lateral root development. Regulates the transition of protophloem cells from proliferation to differentiation, thus impinging on postembryonic growth capacity of the root meristem; this signaling pathway requires CRN and CLV2. The protein is CLAVATA3/ESR (CLE)-related protein 18 of Arabidopsis thaliana (Mouse-ear cress).